A 344-amino-acid chain; its full sequence is Putative esterase NocK (344 aa).

The segment at residues 1-34 is a signal peptide (tat-type signal); that stretch reads MIGVTRRSGLALAVLVSSAACAGAEPVAPPPAPA. The tract at residues 265–295 is disordered; it reads GGADERRREEARPAAAPGGTSTSRETCANPD. Residues 266–276 are compositionally biased toward basic and acidic residues; the sequence is GADERRREEAR.

The protein belongs to the AB hydrolase superfamily. In terms of processing, predicted to be exported by the Tat system. The position of the signal peptide cleavage has not been experimentally proven.

The chain is Putative esterase NocK from Nocardia uniformis subsp. tsuyamanensis.